Here is a 331-residue protein sequence, read N- to C-terminus: Tetraacyldisaccharide 4'-kinase (331 aa).

57 to 64 (SVGGNGKT) lines the ATP pocket.

This sequence belongs to the LpxK family.

The enzyme catalyses a lipid A disaccharide + ATP = a lipid IVA + ADP + H(+). Its pathway is glycolipid biosynthesis; lipid IV(A) biosynthesis; lipid IV(A) from (3R)-3-hydroxytetradecanoyl-[acyl-carrier-protein] and UDP-N-acetyl-alpha-D-glucosamine: step 6/6. Its function is as follows. Transfers the gamma-phosphate of ATP to the 4'-position of a tetraacyldisaccharide 1-phosphate intermediate (termed DS-1-P) to form tetraacyldisaccharide 1,4'-bis-phosphate (lipid IVA). This Histophilus somni (strain 2336) (Haemophilus somnus) protein is Tetraacyldisaccharide 4'-kinase.